We begin with the raw amino-acid sequence, 588 residues long: Probable G-protein coupled receptor 162 (588 aa).

Topologically, residues 1-17 (MARGGLGAEEASLRSNA) are extracellular. A helical membrane pass occupies residues 18 to 38 (LSWLACGLLALLANAWIILSI). Over 39-49 (SAKQQKHKPLE) the chain is Cytoplasmic. Residues 50–70 (LLLCFLAGTHILMAAVPLTTF) form a helical membrane-spanning segment. At 71-91 (AVVQLRRQASSDYDWNESICK) the chain is on the extracellular side. Residue asparagine 86 is glycosylated (N-linked (GlcNAc...) asparagine). The helical transmembrane segment at 92–112 (VFVSTYYTLALATCFTVASLS) threads the bilayer. At 113–133 (YHRMWMVRWPVNYRLSNAKKQ) the chain is on the cytoplasmic side. The chain crosses the membrane as a helical span at residues 134 to 154 (ALHAVMGIWMVSFILSTLPSI). The Extracellular segment spans residues 155 to 174 (GWHNNGERYYARGCQFIVSK). Residues 175–195 (IGLGFGVCFSLLLLGGIVMGL) form a helical membrane-spanning segment. The Cytoplasmic segment spans residues 196 to 275 (VCVAITFYQT…SLQVTNLVSA (80 aa)). The chain crosses the membrane as a helical span at residues 276 to 296 (IVFLYDSLTGVPILVVSFFSL). The Extracellular segment spans residues 297-303 (KSDSAPP). A helical transmembrane segment spans residues 304 to 324 (WMVLAVLWCSMAQTLLLPSFI). The Cytoplasmic segment spans residues 325–588 (WSCERYRADV…GNPIFPQLTL (264 aa)). A phosphoserine mark is found at serine 413 and serine 435. Disordered regions lie at residues 511-545 (ETPL…SPDS) and 561-588 (SLTG…QLTL). Residues 514–525 (LPSPTASPGPSP) show a composition bias toward pro residues. Residues 530–540 (PLGFSPRRLSL) are compositionally biased toward low complexity.

Belongs to the G-protein coupled receptor 1 family.

The protein localises to the cell membrane. Its function is as follows. Orphan receptor. The sequence is that of Probable G-protein coupled receptor 162 (Gpr162) from Mus musculus (Mouse).